A 284-amino-acid polypeptide reads, in one-letter code: Bifunctional protein FolD (284 aa).

Residues 165–167 (GRS) and S190 each bind NADP(+).

The protein belongs to the tetrahydrofolate dehydrogenase/cyclohydrolase family. In terms of assembly, homodimer.

The catalysed reaction is (6R)-5,10-methylene-5,6,7,8-tetrahydrofolate + NADP(+) = (6R)-5,10-methenyltetrahydrofolate + NADPH. It carries out the reaction (6R)-5,10-methenyltetrahydrofolate + H2O = (6R)-10-formyltetrahydrofolate + H(+). The protein operates within one-carbon metabolism; tetrahydrofolate interconversion. Its function is as follows. Catalyzes the oxidation of 5,10-methylenetetrahydrofolate to 5,10-methenyltetrahydrofolate and then the hydrolysis of 5,10-methenyltetrahydrofolate to 10-formyltetrahydrofolate. The sequence is that of Bifunctional protein FolD from Streptococcus gordonii (strain Challis / ATCC 35105 / BCRC 15272 / CH1 / DL1 / V288).